A 283-amino-acid polypeptide reads, in one-letter code: Polyamine aminopropyltransferase (283 aa).

The PABS domain maps to 5–241; sequence NNWYIEHFER…GWWSVTLARK (237 aa). An S-methyl-5'-thioadenosine-binding site is contributed by Q35. The spermidine site is built by H66 and D90. Residues D110 and 141-142 contribute to the S-methyl-5'-thioadenosine site; that span reads DG. D160 (proton acceptor) is an active-site residue. Spermidine is bound at residue 160 to 163; the sequence is DSTD. P167 contributes to the S-methyl-5'-thioadenosine binding site.

Belongs to the spermidine/spermine synthase family. As to quaternary structure, homodimer or homotetramer.

It localises to the cytoplasm. The catalysed reaction is S-adenosyl 3-(methylsulfanyl)propylamine + putrescine = S-methyl-5'-thioadenosine + spermidine + H(+). Its pathway is amine and polyamine biosynthesis; spermidine biosynthesis; spermidine from putrescine: step 1/1. Functionally, catalyzes the irreversible transfer of a propylamine group from the amino donor S-adenosylmethioninamine (decarboxy-AdoMet) to putrescine (1,4-diaminobutane) to yield spermidine. The sequence is that of Polyamine aminopropyltransferase from Stenotrophomonas maltophilia (strain R551-3).